The following is a 267-amino-acid chain: Energy-coupling factor transporter transmembrane protein EcfT (267 aa).

5 consecutive transmembrane segments (helical) span residues 26–46 (IILT…WGYL), 73–93 (ILFI…GTVI), 116–136 (LFLL…IALT), 151–171 (VPVH…PTLL), and 247–267 (LVTG…YVFF).

It belongs to the energy-coupling factor EcfT family. In terms of assembly, forms a stable energy-coupling factor (ECF) transporter complex composed of 2 membrane-embedded substrate-binding proteins (S component), 2 ATP-binding proteins (A component) and 2 transmembrane proteins (T component). May be able to interact with more than 1 S component at a time.

Its subcellular location is the cell membrane. Transmembrane (T) component of an energy-coupling factor (ECF) ABC-transporter complex. Unlike classic ABC transporters this ECF transporter provides the energy necessary to transport a number of different substrates. The sequence is that of Energy-coupling factor transporter transmembrane protein EcfT from Ruminiclostridium cellulolyticum (strain ATCC 35319 / DSM 5812 / JCM 6584 / H10) (Clostridium cellulolyticum).